Here is a 632-residue protein sequence, read N- to C-terminus: Tetratricopeptide repeat protein 39B (632 aa).

TPR repeat units lie at residues 343–376 (SLVLFYHARIELLKGNLEEAQEVFRKCVSVQEEW), 535–568 (CLVKLLKGCCLKNLQRPLQAELCYNHVVESEKLL), and 576–609 (PFTLFELASLYKSQGEIDKAIKFLETARNNYKDY).

It belongs to the TTC39 family.

Regulates high density lipoprotein (HDL) cholesterol metabolism by promoting the ubiquitination and degradation of the oxysterols receptors LXR (NR1H2 and NR1H3). The polypeptide is Tetratricopeptide repeat protein 39B (TTC39B) (Macaca fascicularis (Crab-eating macaque)).